The primary structure comprises 156 residues: Small ribosomal subunit protein uS7 (156 aa).

The protein belongs to the universal ribosomal protein uS7 family. As to quaternary structure, part of the 30S ribosomal subunit. Contacts proteins S9 and S11.

Functionally, one of the primary rRNA binding proteins, it binds directly to 16S rRNA where it nucleates assembly of the head domain of the 30S subunit. Is located at the subunit interface close to the decoding center, probably blocks exit of the E-site tRNA. This is Small ribosomal subunit protein uS7 from Prochlorococcus marinus (strain NATL2A).